The sequence spans 243 residues: ATP-dependent dethiobiotin synthetase BioD (243 aa).

Asp-12 to Phe-17 serves as a coordination point for ATP. Thr-16 provides a ligand contact to Mg(2+). Lys-37 is an active-site residue. Position 41 (Ser-41) interacts with substrate. Residues Asp-54, Glu-115–Gly-118, and Asn-179–Met-180 each bind ATP. Residues Asp-54 and Glu-115 each coordinate Mg(2+).

Belongs to the dethiobiotin synthetase family. As to quaternary structure, homodimer. Mg(2+) is required as a cofactor.

Its subcellular location is the cytoplasm. The catalysed reaction is (7R,8S)-7,8-diammoniononanoate + CO2 + ATP = (4R,5S)-dethiobiotin + ADP + phosphate + 3 H(+). It functions in the pathway cofactor biosynthesis; biotin biosynthesis; biotin from 7,8-diaminononanoate: step 1/2. In terms of biological role, catalyzes a mechanistically unusual reaction, the ATP-dependent insertion of CO2 between the N7 and N8 nitrogen atoms of 7,8-diaminopelargonic acid (DAPA, also called 7,8-diammoniononanoate) to form a ureido ring. This chain is ATP-dependent dethiobiotin synthetase BioD, found in Caldicellulosiruptor bescii (strain ATCC BAA-1888 / DSM 6725 / KCTC 15123 / Z-1320) (Anaerocellum thermophilum).